Consider the following 686-residue polypeptide: Osmo-dependent choline transporter BetT2 (686 aa).

Residues 1-22 lie on the Cytoplasmic side of the membrane; sequence MATDNPRAVDDQETHPKDRLNR. A helical transmembrane segment spans residues 23–43; it reads VVFYVSALIILIFSLTTILFN. At 44–60 the chain is on the periplasmic side; sequence DFANRALNQVLDWVSST. Residues 61-81 traverse the membrane as a helical segment; that stretch reads FSWYYLLAATLYMVFVIFIAC. At 82–100 the chain is on the cytoplasmic side; sequence SRYGNIKLGPKHSKPEFSL. The chain crosses the membrane as a helical span at residues 101 to 121; that stretch reads LSWSAMLFSAGIGIDLMFFSV. Topologically, residues 122 to 150 are periplasmic; sequence AEPLSHYMHPPVGEGQTYEAARQGMVWTL. Residues 151-171 traverse the membrane as a helical segment; the sequence is FHYGLTGWCMYALIGMALGYF. The Cytoplasmic portion of the chain corresponds to 172–203; the sequence is SYRYNLPLTIRSALYPIFGKKINGPIGHSVDT. The helical transmembrane segment at 204–224 threads the bilayer; it reads AAVIGTIFGIATTCGIGVVQL. The Periplasmic segment spans residues 225 to 237; it reads NYGLHVLFDLPEN. A helical transmembrane segment spans residues 238-258; that stretch reads LWVQTALILVAVIITIISVTS. Residues 259-265 lie on the Cytoplasmic side of the membrane; that stretch reads GVNKGLR. A helical membrane pass occupies residues 266 to 286; the sequence is ILSEVNIYVSVGLMLFILFLG. Residues 287-325 are Periplasmic-facing; that stretch reads NTEFLLNALVQNVGDYLSRFPSLALESFAFDQPKEWMNS. The helical transmembrane segment at 326–346 threads the bilayer; sequence WTLFFWAWWVAWSPFVGLFLA. Over 347–356 the chain is Cytoplasmic; that stretch reads RISRGRTIRE. Residues 357–377 form a helical membrane-spanning segment; sequence FVSGTLIIPLLFTLTWLSIFG. Residues 378–412 are Periplasmic-facing; it reads NSALHNVIFDGNIALAETVLSNPAHGFYDLLAQYP. The chain crosses the membrane as a helical span at residues 413–433; the sequence is WFPFIAGVATITGLLFYVTSA. At 434 to 459 the chain is on the cytoplasmic side; sequence DSGALVLGNFTTQFTNIDHDAPRWLS. Residues 460–480 form a helical membrane-spanning segment; the sequence is VFWAVAIGLLTLAMLMTNGIT. Over 481-484 the chain is Periplasmic; that stretch reads ALQN. A helical transmembrane segment spans residues 485–505; sequence ATIIMGLPFSFVMFLVMAGLY. Residues 506 to 686 are Cytoplasmic-facing; the sequence is KSLRLEDYRQ…NRPLFPDPKA (181 aa).

Belongs to the BCCT transporter (TC 2.A.15) family.

It localises to the cell inner membrane. Functionally, uptake of choline in the presence of high salinity. May primarily serve for osmoprotection. The protein is Osmo-dependent choline transporter BetT2 of Acinetobacter baylyi (strain ATCC 33305 / BD413 / ADP1).